The following is a 484-amino-acid chain: tRNA-2-methylthio-N(6)-dimethylallyladenosine synthase (484 aa).

Positions 36–153 (GKLYIKTHGC…LPELIRARRE (118 aa)) constitute an MTTase N-terminal domain. 6 residues coordinate [4Fe-4S] cluster: Cys45, Cys82, Cys116, Cys190, Cys194, and Cys197. The Radical SAM core domain occupies 176–415 (RAEGPSAFVS…HINAHAASIS (240 aa)). The TRAM domain occupies 416 to 479 (QSMVGSVQRV…SNSLRGRIQL (64 aa)). A disordered region spans residues 428-450 (EGPSRRDPNELTGKSENMRPVNF).

Belongs to the methylthiotransferase family. MiaB subfamily. In terms of assembly, monomer. Requires [4Fe-4S] cluster as cofactor.

The protein localises to the cytoplasm. It carries out the reaction N(6)-dimethylallyladenosine(37) in tRNA + (sulfur carrier)-SH + AH2 + 2 S-adenosyl-L-methionine = 2-methylsulfanyl-N(6)-dimethylallyladenosine(37) in tRNA + (sulfur carrier)-H + 5'-deoxyadenosine + L-methionine + A + S-adenosyl-L-homocysteine + 2 H(+). Its function is as follows. Catalyzes the methylthiolation of N6-(dimethylallyl)adenosine (i(6)A), leading to the formation of 2-methylthio-N6-(dimethylallyl)adenosine (ms(2)i(6)A) at position 37 in tRNAs that read codons beginning with uridine. This is tRNA-2-methylthio-N(6)-dimethylallyladenosine synthase from Xanthomonas euvesicatoria pv. vesicatoria (strain 85-10) (Xanthomonas campestris pv. vesicatoria).